The chain runs to 340 residues: uncharacterized protein (340 aa).

An N-terminal signal peptide occupies residues 1 to 23 (MQKKVLSLVLVLAVLESIVPVSA).

This is an uncharacterized protein from Archaeoglobus fulgidus (strain ATCC 49558 / DSM 4304 / JCM 9628 / NBRC 100126 / VC-16).